Reading from the N-terminus, the 332-residue chain is 2,3-diketo-L-gulonate reductase (332 aa).

The Proton donor role is filled by H44. NAD(+)-binding positions include 168–174 (ITMVDMS), 224–225 (WK), and 304–306 (GHE).

The protein belongs to the LDH2/MDH2 oxidoreductase family. DlgD subfamily. Homodimer.

The protein localises to the cytoplasm. It carries out the reaction 3-dehydro-L-gulonate + NAD(+) = 2,3-dioxo-L-gulonate + NADH + H(+). The catalysed reaction is 3-dehydro-L-gulonate + NADP(+) = 2,3-dioxo-L-gulonate + NADPH + H(+). In terms of biological role, catalyzes the reduction of 2,3-diketo-L-gulonate in the presence of NADH, to form 3-keto-L-gulonate. The protein is 2,3-diketo-L-gulonate reductase of Escherichia coli O8 (strain IAI1).